Here is a 341-residue protein sequence, read N- to C-terminus: Ketol-acid reductoisomerase (NADP(+)) (341 aa).

In terms of domain architecture, KARI N-terminal Rossmann spans 2 to 182 (AKIYYNDDAD…GGTRAGVIET (181 aa)). NADP(+) contacts are provided by residues 25-28 (YGSQ), S51, S53, and 83-86 (DQVQ). The active site involves H108. G134 serves as a coordination point for NADP(+). The KARI C-terminal knotted domain occupies 183–328 (TFTEETESDL…RKLRSLFAWE (146 aa)). Mg(2+) is bound by residues D191, E195, E227, and E231. S252 lines the substrate pocket.

The protein belongs to the ketol-acid reductoisomerase family. Requires Mg(2+) as cofactor.

It carries out the reaction (2R)-2,3-dihydroxy-3-methylbutanoate + NADP(+) = (2S)-2-acetolactate + NADPH + H(+). The catalysed reaction is (2R,3R)-2,3-dihydroxy-3-methylpentanoate + NADP(+) = (S)-2-ethyl-2-hydroxy-3-oxobutanoate + NADPH + H(+). The protein operates within amino-acid biosynthesis; L-isoleucine biosynthesis; L-isoleucine from 2-oxobutanoate: step 2/4. It participates in amino-acid biosynthesis; L-valine biosynthesis; L-valine from pyruvate: step 2/4. Its function is as follows. Involved in the biosynthesis of branched-chain amino acids (BCAA). Catalyzes an alkyl-migration followed by a ketol-acid reduction of (S)-2-acetolactate (S2AL) to yield (R)-2,3-dihydroxy-isovalerate. In the isomerase reaction, S2AL is rearranged via a Mg-dependent methyl migration to produce 3-hydroxy-3-methyl-2-ketobutyrate (HMKB). In the reductase reaction, this 2-ketoacid undergoes a metal-dependent reduction by NADPH to yield (R)-2,3-dihydroxy-isovalerate. The polypeptide is Ketol-acid reductoisomerase (NADP(+)) (Kocuria rhizophila (strain ATCC 9341 / DSM 348 / NBRC 103217 / DC2201)).